Consider the following 228-residue polypeptide: MEYKILDKGFLRLVDMMGDDYAAVKAARVSYGKGIKTPEKDKNLIFYLMEHGHETPFEHIVFTFHVKAPIFVARQWFRHRIGSFNEASLRYTELKDEFYIPDHVRKNVVEDKQKAIKVDDEQLKQKALDLIESSIENSYKVYKELLEMGVAREMARIVLPMSSYTQFYWTVNARSLMNFLNLRADSHAQWEIQQYALNIANIFKEKCPWTFEAFLKFAYKGDLLKGGE.

Positions 1 to 217 (MEYKILDKGF…PWTFEAFLKF (217 aa)) constitute a ThyX domain. FAD-binding positions include Thr55, 78-80 (RHR), and Glu86. DUMP contacts are provided by residues 75 to 78 (QWFR), 86 to 90 (EASLR), and Arg156. Residues 78–88 (RHRIGSFNEAS) carry the ThyX motif motif. Residues 172–174 (NAR) and Asn178 contribute to the FAD site. Residue Arg183 coordinates dUMP. The active-site Involved in ionization of N3 of dUMP, leading to its activation is Arg183.

The protein belongs to the thymidylate synthase ThyX family. As to quaternary structure, homotetramer. It depends on FAD as a cofactor.

The enzyme catalyses dUMP + (6R)-5,10-methylene-5,6,7,8-tetrahydrofolate + NADPH + H(+) = dTMP + (6S)-5,6,7,8-tetrahydrofolate + NADP(+). Its pathway is pyrimidine metabolism; dTTP biosynthesis. Functionally, catalyzes the reductive methylation of 2'-deoxyuridine-5'-monophosphate (dUMP) to 2'-deoxythymidine-5'-monophosphate (dTMP) while utilizing 5,10-methylenetetrahydrofolate (mTHF) as the methyl donor, and NADPH and FADH(2) as the reductant. This chain is Flavin-dependent thymidylate synthase, found in Thermosipho africanus (strain TCF52B).